A 162-amino-acid chain; its full sequence is Necrosis-inducing secreted protein 1 (162 aa).

Residues 1 to 19 form the signal peptide; sequence MQFLTSLAAAASLVSLASA. N-linked (GlcNAc...) asparagine glycans are attached at residues Asn88, Asn126, Asn133, and Asn150. The interval 103–132 is BAK1/SERK3-binding; it reads EYVIAASLFSLYGASSSPTVSNYNVTVNVG.

This sequence belongs to the NIS1 effector family. As to quaternary structure, interacts with the host pattern recognition receptor (PRR)-associated kinases BAK1/SERK3, BKK1/SERK4 and BIK1.

It is found in the secreted. The protein resides in the host cytoplasm. Functionally, secreted effector that induces necrotic lesions in Nicotiana benthamiana. Interacts with the host receptor-like kinases (RLKs) BAK1/SERK3 and BKK1/SERK4, inhibits their kinase activity and suppresses INF1-induced pathogen-associated molecular pattern (PAMP)-triggered immunity (PTI) in N.benthamiana. Also interacts with the host receptor-like cytoplasmic kinase (RLCK) BIK1 and inhibits its kinase activity, thereby inhibiting PAMP-induced ROS generation. In PTI, phosphorylation relaying by RLKs and RLCKs is critical for the initiation of downstream signaling. In Colletotrichum orbiculare (strain 104-T / ATCC 96160 / CBS 514.97 / LARS 414 / MAFF 240422) (Cucumber anthracnose fungus), this protein is Necrosis-inducing secreted protein 1.